We begin with the raw amino-acid sequence, 111 residues long: Dynein light chain Tctex-type (111 aa).

Belongs to the dynein light chain Tctex-type family. The cytoplasmic dynein complex consists of two catalytic heavy chains (HCs) and a number of non-catalytic subunits presented by intermediate chains (ICs), light intermediate chains (LICs) and light chains (LCs).

It is found in the cytoplasm. The protein resides in the cytoskeleton. Functionally, acts as one of several non-catalytic accessory components of the cytoplasmic dynein complex that are thought to be involved in linking dynein to cargos and to adapter proteins that regulate dynein function. Cytoplasmic dynein acts as a motor for the intracellular retrograde motility of vesicles and organelles along microtubules. Required for spermatid differentiation. Is not required for polarized transport in rhabdomere development and appears to be a non-essential component of the cytoplasmic dynein complex. The protein is Dynein light chain Tctex-type (Dlc90F) of Drosophila melanogaster (Fruit fly).